Here is a 315-residue protein sequence, read N- to C-terminus: Transaldolase (315 aa).

The active-site Schiff-base intermediate with substrate is Lys125.

Belongs to the transaldolase family. Type 1 subfamily. As to quaternary structure, homodimer.

It localises to the cytoplasm. The catalysed reaction is D-sedoheptulose 7-phosphate + D-glyceraldehyde 3-phosphate = D-erythrose 4-phosphate + beta-D-fructose 6-phosphate. The protein operates within carbohydrate degradation; pentose phosphate pathway; D-glyceraldehyde 3-phosphate and beta-D-fructose 6-phosphate from D-ribose 5-phosphate and D-xylulose 5-phosphate (non-oxidative stage): step 2/3. Its function is as follows. Transaldolase is important for the balance of metabolites in the pentose-phosphate pathway. This Leptothrix cholodnii (strain ATCC 51168 / LMG 8142 / SP-6) (Leptothrix discophora (strain SP-6)) protein is Transaldolase.